A 38-amino-acid chain; its full sequence is Large ribosomal subunit protein bL36 (38 aa).

This sequence belongs to the bacterial ribosomal protein bL36 family.

The chain is Large ribosomal subunit protein bL36 from Baumannia cicadellinicola subsp. Homalodisca coagulata.